The sequence spans 55 residues: MVKLTSIAAGVAAIAAGASAAATTTLSQSDERVNLVELGVYVSDIRAHLAEYYSF.

The N-terminal stretch at 1–20 (MVKLTSIAAGVAAIAAGASA) is a signal peptide.

Belongs to the SRP1/TIP1 family. Seripauperin subfamily.

The chain is Seripauperin-7 (PAU7) from Saccharomyces cerevisiae (strain ATCC 204508 / S288c) (Baker's yeast).